Reading from the N-terminus, the 807-residue chain is Histone transcription regulator slm9 (807 aa).

WD repeat units lie at residues S62 to Q100 and L102 to V140. The tract at residues E144–E164 is disordered. 4 WD repeats span residues G182–S221, P230–N273, G276–V322, and L326–D367. The segment at N388 to R437 is disordered. Positions R395 to K409 are enriched in polar residues. 3 positions are modified to phosphoserine: S406, S421, and S422. The span at K426–V435 shows a compositional bias: basic residues. WD repeat units follow at residues D492–S526 and A528–S574.

The protein belongs to the WD repeat HIR1 family. In terms of assembly, interacts with hip1 and hip3.

It localises to the cytoplasm. The protein resides in the nucleus. Its function is as follows. Probably required for replication-independent chromatin assembly. Required for transcriptional silencing in the outer repeat (otr) centromeric repeats and the Tf2 long terminal repeat retrotransposons. May play an indirect role in the regulation of cdc2 and/or wee1 at the G2/M stage of mitosis. The chain is Histone transcription regulator slm9 (slm9) from Schizosaccharomyces pombe (strain 972 / ATCC 24843) (Fission yeast).